A 608-amino-acid polypeptide reads, in one-letter code: MRTPQLALLQVFLLMFPDGVRPQPSSSPSGAVPTSLDLQPGTVGGTLQSSSEATATRPAMPGISTVVPTLVTPSAPGNRTVDLFPVLPICVCDLTPGACDINCCCDRDCYLLHPRTVFSFCLPGSVRSSSWVCVDNSLIFRSNSPFPSRVFMDSNGIRQFCVHVNNSKLNYFQKLQKVNATNFQDLAAEFGGESFTSTFQTQSPPSFYRAGDPILTYFPKWSVISLLRQPAGVGAAGLCAESNPAGFLESKSTTCTRFFKNLASSCTLDSALNAASYYNFTVLKVPRGMTDPQNMEFQVPVTLTSQANAPLLAGNTCQNVVSQVTYEIETNGTFGIQKVSVSLGQTNLTVEPGASLQQHFILHFRAFQQSTAASITSPRSGNPGYIVGKPLLALTGDVSYSMTLLRSQGNGSCSVNRHEVQFGVNAISGCKLRLKKADCSYLQQEIYQTLHGRPRPQHVAIFGNADPAQKGGWTRILNRHCNISAIICTSCCLIPVSLEIQVLWAYVGLLSNPQAHVSGVRFLYQCQSVRDSQQVTEVSLTTIVNFVDITQKPEPPRGQPKMDWKLPFDFFFPFRVAFSRGVSSQKCSVSPVLILCLLLLGVLNLETT.

Residues methionine 1 to proline 22 form the signal peptide. The segment at glutamine 23 to proline 58 is disordered. Topologically, residues glutamine 23–lysine 586 are extracellular. Residues glycine 45–threonine 54 show a composition bias toward polar residues. 3 N-linked (GlcNAc...) asparagine glycosylation sites follow: asparagine 78, asparagine 179, and asparagine 347. Residues cysteine 587–threonine 607 form a helical membrane-spanning segment. Threonine 608 is a topological domain (cytoplasmic).

This sequence belongs to the tectonic family. Part of the tectonic-like complex (also named B9 complex).

The protein resides in the membrane. In terms of biological role, part of the tectonic-like complex which is required for tissue-specific ciliogenesis and may regulate ciliary membrane composition. May be involved in apoptosis regulation. Necessary for signal transduction through the sonic hedgehog (Shh) signaling pathway. The protein is Tectonic-3 (TCTN3) of Macaca fascicularis (Crab-eating macaque).